The chain runs to 235 residues: Elongation factor Tu, chloroplastic (235 aa).

The region spanning Lys-1–Thr-125 is the tr-type G domain. Asn-47–Asp-50 serves as a coordination point for GTP.

It belongs to the TRAFAC class translation factor GTPase superfamily. Classic translation factor GTPase family. EF-Tu/EF-1A subfamily.

Its subcellular location is the plastid. The protein localises to the chloroplast. The enzyme catalyses GTP + H2O = GDP + phosphate + H(+). GTP hydrolase that promotes the GTP-dependent binding of aminoacyl-tRNA to the A-site of ribosomes during protein biosynthesis. This Bryopsis plumosa (Green alga) protein is Elongation factor Tu, chloroplastic (tufA).